A 106-amino-acid chain; its full sequence is Small ribosomal subunit protein uS10 (106 aa).

Belongs to the universal ribosomal protein uS10 family. As to quaternary structure, part of the 30S ribosomal subunit.

Involved in the binding of tRNA to the ribosomes. This chain is Small ribosomal subunit protein uS10, found in Synechococcus sp. (strain CC9902).